The chain runs to 319 residues: Acetyl-coenzyme A carboxylase carboxyl transferase subunit alpha (319 aa).

One can recognise a CoA carboxyltransferase C-terminal domain in the interval 43-296 (LRDKSIELTR…KKQLLFDLSE (254 aa)).

Belongs to the AccA family. Acetyl-CoA carboxylase is a heterohexamer composed of biotin carboxyl carrier protein (AccB), biotin carboxylase (AccC) and two subunits each of ACCase subunit alpha (AccA) and ACCase subunit beta (AccD).

It localises to the cytoplasm. The catalysed reaction is N(6)-carboxybiotinyl-L-lysyl-[protein] + acetyl-CoA = N(6)-biotinyl-L-lysyl-[protein] + malonyl-CoA. Its pathway is lipid metabolism; malonyl-CoA biosynthesis; malonyl-CoA from acetyl-CoA: step 1/1. In terms of biological role, component of the acetyl coenzyme A carboxylase (ACC) complex. First, biotin carboxylase catalyzes the carboxylation of biotin on its carrier protein (BCCP) and then the CO(2) group is transferred by the carboxyltransferase to acetyl-CoA to form malonyl-CoA. This is Acetyl-coenzyme A carboxylase carboxyl transferase subunit alpha from Baumannia cicadellinicola subsp. Homalodisca coagulata.